The following is a 515-amino-acid chain: Histidine ammonia-lyase (515 aa).

Residues 142–144 (ASG) constitute a cross-link (5-imidazolinone (Ala-Gly)). Residue serine 143 is modified to 2,3-didehydroalanine (Ser).

It belongs to the PAL/histidase family. Contains an active site 4-methylidene-imidazol-5-one (MIO), which is formed autocatalytically by cyclization and dehydration of residues Ala-Ser-Gly.

It localises to the cytoplasm. It catalyses the reaction L-histidine = trans-urocanate + NH4(+). The protein operates within amino-acid degradation; L-histidine degradation into L-glutamate; N-formimidoyl-L-glutamate from L-histidine: step 1/3. The protein is Histidine ammonia-lyase of Bradyrhizobium sp. (strain ORS 278).